Here is a 334-residue protein sequence, read N- to C-terminus: Kihadalactone A synthase LFS (334 aa).

Residues 181–286 (KTASYSNMFH…RYSTGLFLCP (106 aa)) form the Fe2OG dioxygenase domain. Residues His208, Asp210, and His269 each contribute to the Fe cation site. Residue Arg277 coordinates 2-oxoglutarate.

This sequence belongs to the iron/ascorbate-dependent oxidoreductase family. Requires Fe(2+) as cofactor. Expressed in maturing fruits and in juice vesicles.

It carries out the reaction (1R,2R,3S,8R,10R,11R,15S,16S)-3-(acetyloxy)-15-(1-hydroxy-4-oxobutan-2-yl)-2,7,7,11,16-pentamethyl-5-oxo-6-oxatetracyclo[9.7.0.0(2,8).0(12,16)]octadec-12-en-10-yl acetate + 2-oxoglutarate + O2 = kihadalactone A + succinate + CO2 + 2 H2O. Its pathway is secondary metabolite biosynthesis; terpenoid biosynthesis. Functionally, 2-oxoglutarate-Fe(II) type oxidoreductase involved in the biosynthesis of limonoids triterpene natural products such as limonin, a compound with insecticidal activity responsible for the bitter taste in citrus. Catalyzes the formation of kihadalactone A. The protein is Kihadalactone A synthase LFS of Citrus sinensis (Sweet orange).